The sequence spans 437 residues: MANVVVVGAQWGDEGKGKIVDWLSERADVIARFQGGHNAGHTLVIDKKVYKLHALPSGVVRGGKLSVIGNGVVLDPWHLMKEIETVRAQGVEITPETLMIAENTPLIMPFHGELDRAREEAASKGTKIGTTGRGIGPAYEDKVGRRAIRVADLADDATLEARVDRALQHHDPLRKGLGVEPIDRDALVAQLKEIASEILPFAAPVWKVMNEKRKAGKRILFEGAQGALLDIDFGTYPFVTSSNVIAGQAATGVGIGPNSIDYVLGIVKAYTTRVGEGPFPTELLGADGKPDADGERLGTRGHEFGTTTGRQRRCGWFDACLVRQTCATSGINGISLTKLDVLDGFETLKICVGYELDGERLDYLPTAADQQARCKPIYEEMEGWSESTEGARSWAELPANAIKYVRRVEELIQCPVALLSTSPERDDTILVTDPFAD.

GTP is bound by residues 12 to 18 and 40 to 42; these read GDEGKGK and GHT. The Proton acceptor role is filled by aspartate 13. The Mg(2+) site is built by aspartate 13 and glycine 40. IMP is bound by residues 13 to 16, 38 to 41, threonine 131, arginine 145, glutamine 225, and threonine 240; these read DEGK and NAGH. Histidine 41 acts as the Proton donor in catalysis. The segment at 281–304 is disordered; the sequence is TELLGADGKPDADGERLGTRGHEF. The segment covering 288 to 303 has biased composition (basic and acidic residues); the sequence is GKPDADGERLGTRGHE. Position 306–312 (306–312) interacts with substrate; that stretch reads TTTGRQR. An IMP-binding site is contributed by arginine 310. Residues arginine 312, 338 to 340, and 420 to 422 each bind GTP; these read KLD and STS.

This sequence belongs to the adenylosuccinate synthetase family. In terms of assembly, homodimer. It depends on Mg(2+) as a cofactor.

The protein resides in the cytoplasm. It catalyses the reaction IMP + L-aspartate + GTP = N(6)-(1,2-dicarboxyethyl)-AMP + GDP + phosphate + 2 H(+). It functions in the pathway purine metabolism; AMP biosynthesis via de novo pathway; AMP from IMP: step 1/2. In terms of biological role, plays an important role in the de novo pathway of purine nucleotide biosynthesis. Catalyzes the first committed step in the biosynthesis of AMP from IMP. The sequence is that of Adenylosuccinate synthetase from Ruegeria sp. (strain TM1040) (Silicibacter sp.).